A 477-amino-acid chain; its full sequence is Aspartyl/glutamyl-tRNA(Asn/Gln) amidotransferase subunit B (477 aa).

The protein belongs to the GatB/GatE family. GatB subfamily. In terms of assembly, heterotrimer of A, B and C subunits.

It catalyses the reaction L-glutamyl-tRNA(Gln) + L-glutamine + ATP + H2O = L-glutaminyl-tRNA(Gln) + L-glutamate + ADP + phosphate + H(+). It carries out the reaction L-aspartyl-tRNA(Asn) + L-glutamine + ATP + H2O = L-asparaginyl-tRNA(Asn) + L-glutamate + ADP + phosphate + 2 H(+). Its function is as follows. Allows the formation of correctly charged Asn-tRNA(Asn) or Gln-tRNA(Gln) through the transamidation of misacylated Asp-tRNA(Asn) or Glu-tRNA(Gln) in organisms which lack either or both of asparaginyl-tRNA or glutaminyl-tRNA synthetases. The reaction takes place in the presence of glutamine and ATP through an activated phospho-Asp-tRNA(Asn) or phospho-Glu-tRNA(Gln). The protein is Aspartyl/glutamyl-tRNA(Asn/Gln) amidotransferase subunit B of Streptococcus gordonii (strain Challis / ATCC 35105 / BCRC 15272 / CH1 / DL1 / V288).